The sequence spans 138 residues: Nucleoside diphosphate kinase (138 aa).

ATP-binding residues include Lys9, Phe57, Arg85, Thr91, Arg102, and Asn112. Residue His120 is the Pros-phosphohistidine intermediate of the active site.

This sequence belongs to the NDK family. As to quaternary structure, homotetramer. It depends on Mg(2+) as a cofactor.

The protein resides in the cytoplasm. The enzyme catalyses a 2'-deoxyribonucleoside 5'-diphosphate + ATP = a 2'-deoxyribonucleoside 5'-triphosphate + ADP. It catalyses the reaction a ribonucleoside 5'-diphosphate + ATP = a ribonucleoside 5'-triphosphate + ADP. Its function is as follows. Major role in the synthesis of nucleoside triphosphates other than ATP. The ATP gamma phosphate is transferred to the NDP beta phosphate via a ping-pong mechanism, using a phosphorylated active-site intermediate. The polypeptide is Nucleoside diphosphate kinase (Streptococcus agalactiae serotype III (strain NEM316)).